The primary structure comprises 102 residues: MAKLGNVEHIEEKVESELQPPHMYKVVLNNDDYTPMDFVVEVLQRFFEKNEQQAVDIMLAIHNQGKGLCGVFPFGIAETKVFQVNQFARENQHPLLCTLEKV.

The protein belongs to the ClpS family. As to quaternary structure, binds to the N-terminal domain of the chaperone ClpA.

Functionally, involved in the modulation of the specificity of the ClpAP-mediated ATP-dependent protein degradation. This is ATP-dependent Clp protease adapter protein ClpS from Shewanella frigidimarina (strain NCIMB 400).